The chain runs to 96 residues: Cytochrome b (96 aa).

3 consecutive transmembrane segments (helical) span residues 1 to 15 (LCXI…FLAM), 39 to 60 (WLIR…YLHI), and 75 to 95 (WNVG…GYVL). Heme b is bound by residues histidine 45 and histidine 59.

This sequence belongs to the cytochrome b family. The cytochrome bc1 complex contains 3 respiratory subunits (MT-CYB, CYC1 and UQCRFS1), 2 core proteins (UQCRC1 and UQCRC2) and probably 6 low-molecular weight proteins. Heme b serves as cofactor.

It is found in the mitochondrion inner membrane. Component of the ubiquinol-cytochrome c reductase complex (complex III or cytochrome b-c1 complex) that is part of the mitochondrial respiratory chain. The b-c1 complex mediates electron transfer from ubiquinol to cytochrome c. Contributes to the generation of a proton gradient across the mitochondrial membrane that is then used for ATP synthesis. This Geophagus steindachneri (Red hump earth eater) protein is Cytochrome b (mt-cyb).